The chain runs to 246 residues: Acetoacetate decarboxylase (246 aa).

Catalysis depends on lysine 116, which acts as the Schiff-base intermediate with acetoacetate.

This sequence belongs to the ADC family.

The enzyme catalyses acetoacetate + H(+) = acetone + CO2. Functionally, catalyzes the conversion of acetoacetate to acetone and carbon dioxide. The protein is Acetoacetate decarboxylase of Burkholderia lata (strain ATCC 17760 / DSM 23089 / LMG 22485 / NCIMB 9086 / R18194 / 383).